The chain runs to 1396 residues: uncharacterized protein (1396 aa).

Position 88 to 95 (88 to 95) interacts with ATP; the sequence is AYKKWGRS. 2 disordered regions span residues 146 to 165 and 198 to 388; these read EKIHKKLEGSPSPEEELSPT and KPCS…VKDL. Residues 198-221 show a composition bias toward low complexity; sequence KPCSYSSSSSSSTVPPASTDTSSP. The span at 242–268 shows a compositional bias: basic and acidic residues; the sequence is MHEKAQSRSRHEKESKLSSSTIEEKPA. Low complexity predominate over residues 286–300; that stretch reads SWSSGSSEAGSSSSG. The segment covering 312 to 327 has biased composition (basic residues); sequence VKVRHKAREIRNRKGR. Phosphoserine occurs at positions 817 and 1083. Residues 1113 to 1137 are disordered; the sequence is PISASELSPGGGSESEFESEKDEAS. Phosphoserine occurs at positions 1197 and 1339. Residues 1347 to 1396 form a disordered region; that stretch reads TGERGSETKPNGLHRKMCSSASSDTGDTGSEAGGEWVGPSREELFSRTHL. A compositionally biased stretch (low complexity) spans 1365 to 1376; it reads SSASSDTGDTGS. Over residues 1386-1396 the composition is skewed to basic and acidic residues; sequence SREELFSRTHL.

This is an uncharacterized protein from Mus musculus (Mouse).